The sequence spans 291 residues: Ribosomal RNA small subunit methyltransferase I (291 aa).

This sequence belongs to the methyltransferase superfamily. RsmI family.

The protein localises to the cytoplasm. It catalyses the reaction cytidine(1402) in 16S rRNA + S-adenosyl-L-methionine = 2'-O-methylcytidine(1402) in 16S rRNA + S-adenosyl-L-homocysteine + H(+). Catalyzes the 2'-O-methylation of the ribose of cytidine 1402 (C1402) in 16S rRNA. In Neisseria meningitidis serogroup B (strain ATCC BAA-335 / MC58), this protein is Ribosomal RNA small subunit methyltransferase I.